Reading from the N-terminus, the 962-residue chain is UPF0182 protein SACE_1102 (962 aa).

A run of 7 helical transmembrane segments spans residues 10-30, 55-75, 106-126, 168-188, 203-223, 250-270, and 279-299; these read ILLI…RLLG, LGLG…NLWI, LFGW…AQSD, FVAI…FGGI, IQLS…YFLD, VKLI…AAIF, and IATV…PALL. 2 disordered regions span residues 707–730 and 876–916; these read RTFW…GNQQ and FGPG…EMTK. Pro residues predominate over residues 899 to 910; it reads GQQPPTQQPPAG.

This sequence belongs to the UPF0182 family.

The protein localises to the cell membrane. This Saccharopolyspora erythraea (strain ATCC 11635 / DSM 40517 / JCM 4748 / NBRC 13426 / NCIMB 8594 / NRRL 2338) protein is UPF0182 protein SACE_1102.